Reading from the N-terminus, the 609-residue chain is MTIKFLSESTINRIAAGEVIERPASVVKELVENAVDAGSTKIDIILERAGKNLIIISDDGIGMTDKELEIAVERHTTSKLDESDFLNIHTFGFRGEALPSIAAISKMLITSKKQGADKAFQIKLIGGNEKQVTVSVHNEGTKIEIRDLFFATPARLKFLRADKTELAATVDVVKKIALAHPEISFSLTHDDRNLLKFKGQNKDAETNLKQRIIDVIGDDFIKNAAYIDFKTPDFSICGYTSIPTYNRASSEDQFLFINNRPVKDKLLQVALRVAYQDYLARDRYPLCAIFLQIDPQLVDVNVHPAKAEVRFHDPNYVRNLLIEAIKNALTNKSHVTSTTIASDALQLFKNPLVNKQPSVSKAVSVNSKPADYRPAMSPSFKPTPNTACQKLIDTLPHAKIEQEVERRIEHEQQVHKQYKLGAAKAQLHTTYIISQTEDSIVITDQHAAHERLGYEKIKDYLKTEELIKQRLLIPEIVELPNERKADCLYENREKLYKLGLTLEKFGEKSIIVTEIPNILEDVNVQKLIQDLADHLSDFGENIALTELIEHVTETYACHYSIRAGRKLSADEMNALLRQMENTPFSGQCNHGRPTYIELKLKDIERLFGR.

This sequence belongs to the DNA mismatch repair MutL/HexB family.

In terms of biological role, this protein is involved in the repair of mismatches in DNA. It is required for dam-dependent methyl-directed DNA mismatch repair. May act as a 'molecular matchmaker', a protein that promotes the formation of a stable complex between two or more DNA-binding proteins in an ATP-dependent manner without itself being part of a final effector complex. The sequence is that of DNA mismatch repair protein MutL from Rickettsia felis (strain ATCC VR-1525 / URRWXCal2) (Rickettsia azadi).